A 207-amino-acid polypeptide reads, in one-letter code: Proteasome subunit beta 2 (207 aa).

The propeptide at Met1–Gly13 is removed in mature form; by autocatalysis. The Nucleophile role is filled by Thr14.

It belongs to the peptidase T1B family. The 20S proteasome core is composed of 14 alpha and 14 beta subunits that assemble into four stacked heptameric rings, resulting in a barrel-shaped structure. The two inner rings, each composed of seven catalytic beta subunits, are sandwiched by two outer rings, each composed of seven alpha subunits. The catalytic chamber with the active sites is on the inside of the barrel. Has a gated structure, the ends of the cylinder being occluded by the N-termini of the alpha-subunits. Is capped at one or both ends by the proteasome regulatory ATPase, PAN.

It localises to the cytoplasm. It carries out the reaction Cleavage of peptide bonds with very broad specificity.. The formation of the proteasomal ATPase PAN-20S proteasome complex, via the docking of the C-termini of PAN into the intersubunit pockets in the alpha-rings, triggers opening of the gate for substrate entry. Interconversion between the open-gate and close-gate conformations leads to a dynamic regulation of the 20S proteasome proteolysis activity. Component of the proteasome core, a large protease complex with broad specificity involved in protein degradation. The chain is Proteasome subunit beta 2 from Sulfurisphaera tokodaii (strain DSM 16993 / JCM 10545 / NBRC 100140 / 7) (Sulfolobus tokodaii).